The chain runs to 842 residues: Oxysterol-binding protein-related protein 7 (842 aa).

The disordered stretch occupies residues 1 to 28 (MDFQERDPPFLPESAQSSKPSSAQQASE). Residues 14–27 (SAQSSKPSSAQQAS) show a composition bias toward low complexity. One can recognise a PH domain in the interval 47-142 (PERQEGHLLK…WVAQLRAHRL (96 aa)). Position 171 is a phosphothreonine (threonine 171). Residues serine 217, serine 226, serine 256, and serine 272 each carry the phosphoserine modification. The interval 330-369 (DMHQGSELSRMGVSEASTGQRRLHSLSTSSDTTADSFSSL) is disordered. A compositionally biased stretch (low complexity) spans 354–369 (SLSTSSDTTADSFSSL).

The protein belongs to the OSBP family. Expressed in epithelium of small and large intestines (at protein level). Expressed in stomach, duodenum, jejunum, ascending colon, spleen, thymus, lymph node, trachea and leukocytes.

It localises to the cytoplasm. The protein resides in the cytosol. It is found in the endoplasmic reticulum membrane. Its subcellular location is the cell membrane. In Homo sapiens (Human), this protein is Oxysterol-binding protein-related protein 7 (OSBPL7).